The primary structure comprises 380 residues: Succinate--CoA ligase [ADP-forming] subunit beta 2 (380 aa).

The 227-residue stretch at 9–235 (KQIFSKHGIR…YTEADQMERI (227 aa)) folds into the ATP-grasp domain. ATP-binding positions include K45, 52-54 (GRG), E91, I94, and E99. The Mg(2+) site is built by N191 and D204. Residues N255 and 312-314 (GIT) each bind substrate.

It belongs to the succinate/malate CoA ligase beta subunit family. In terms of assembly, heterotetramer of two alpha and two beta subunits. Mg(2+) is required as a cofactor.

It catalyses the reaction succinate + ATP + CoA = succinyl-CoA + ADP + phosphate. The enzyme catalyses GTP + succinate + CoA = succinyl-CoA + GDP + phosphate. It participates in carbohydrate metabolism; tricarboxylic acid cycle; succinate from succinyl-CoA (ligase route): step 1/1. In terms of biological role, succinyl-CoA synthetase functions in the citric acid cycle (TCA), coupling the hydrolysis of succinyl-CoA to the synthesis of either ATP or GTP and thus represents the only step of substrate-level phosphorylation in the TCA. The beta subunit provides nucleotide specificity of the enzyme and binds the substrate succinate, while the binding sites for coenzyme A and phosphate are found in the alpha subunit. The chain is Succinate--CoA ligase [ADP-forming] subunit beta 2 from Archaeoglobus fulgidus (strain ATCC 49558 / DSM 4304 / JCM 9628 / NBRC 100126 / VC-16).